A 490-amino-acid polypeptide reads, in one-letter code: GTPase Der (490 aa).

2 EngA-type G domains span residues phenylalanine 3 to glutamate 167 and leucine 203 to asparagine 378. GTP-binding positions include glycine 9–serine 16, aspartate 56–leucine 60, asparagine 119–glutamate 122, glycine 209–serine 216, aspartate 256–methionine 260, and asparagine 321–aspartate 324. The KH-like domain occupies arginine 379–alanine 465. The segment at proline 451–glycine 490 is disordered. Basic residues predominate over residues lysine 469–glycine 484.

Belongs to the TRAFAC class TrmE-Era-EngA-EngB-Septin-like GTPase superfamily. EngA (Der) GTPase family. As to quaternary structure, associates with the 50S ribosomal subunit.

In terms of biological role, GTPase that plays an essential role in the late steps of ribosome biogenesis. In Dinoroseobacter shibae (strain DSM 16493 / NCIMB 14021 / DFL 12), this protein is GTPase Der.